A 783-amino-acid chain; its full sequence is Flavin carrier protein 2 (783 aa).

The first 22 residues, 1-22 (MIFLNTFARCLLTCFVLCSGTA), serve as a signal peptide directing secretion. Topologically, residues 23 to 182 (RSSDTNDTTP…NGKTVQTKYA (160 aa)) are lumenal. N-linked (GlcNAc...) asparagine glycans are attached at residues N28, N65, N81, and N156. The chain crosses the membrane as a helical span at residues 183-203 (AWPIAAISGVGVLTSGFVSVI). Topologically, residues 204–211 (GYSATAAH) are cytoplasmic. Residues 212–232 (IASNSISLFIYFQNLAITAMM) traverse the membrane as a helical segment. Residues 233-347 (GVSRVPPIAA…AYLANIELSN (115 aa)) lie on the Lumenal side of the membrane. N323 carries N-linked (GlcNAc...) asparagine glycosylation. The helical transmembrane segment at 348-368 (FFLTGIVFFLFFLFVVVVSLI) threads the bilayer. At 369–402 (FFKALLEVLTRARILKETSNFFQYRKNWGSIIKG) the chain is on the cytoplasmic side. A helical transmembrane segment spans residues 403-423 (TLFRLSIIAFPQVSLLAIWEF). Residues 424-430 (TQVNSPA) lie on the Lumenal side of the membrane. A helical transmembrane segment spans residues 431–451 (IVVDAVVILLIITGLLVYGTI). Residues 452-492 (RVFIKGRESLRLYKNPAYLLYSDTYFLNKFGFLYVQFKADK) lie on the Cytoplasmic side of the membrane. Residues 493–513 (FWWLLPLLSYAFLRSLFVAVL) form a helical membrane-spanning segment. Topologically, residues 514–521 (QNQGKAQA) are lumenal. Residues 522 to 542 (MIIFVIELAYFVCLCWIRPYL) form a helical membrane-spanning segment. Residues 543 to 547 (DKRTN) lie on the Cytoplasmic side of the membrane. The helical transmembrane segment at 548–568 (VFNIAIHLVNLINAFFFLFFS) threads the bilayer. Over 569 to 581 (NLFKQPAVVSSVM) the chain is Lumenal. A helical membrane pass occupies residues 582–602 (AVILFVLNAVFALFLLLFTIV). The Cytoplasmic segment spans residues 603 to 783 (TCTLALLHRN…ENARNNNPYL (181 aa)). A disordered region spans residues 681–783 (RLFDDETSSS…ENARNNNPYL (103 aa)). Over residues 688-697 (SSSSFKQNSS) the composition is skewed to low complexity. 2 stretches are compositionally biased toward polar residues: residues 704–748 (VTEQ…TSSL) and 756–767 (YLGNSNKSYSHF). Residues 768–783 (NNNGSNENARNNNPYL) are compositionally biased toward low complexity.

It belongs to the transient receptor potential (TRP) ion channel family.

The protein resides in the endoplasmic reticulum membrane. May be responsible for the transport of FAD into the endoplasmic reticulum lumen, where it is required for oxidative protein folding. The polypeptide is Flavin carrier protein 2 (FLC2) (Saccharomyces cerevisiae (strain ATCC 204508 / S288c) (Baker's yeast)).